The chain runs to 527 residues: Pyruvate kinase 2, cytosolic (527 aa).

Position 58 (Arg-58) interacts with substrate. Residues Asp-60, Ser-62, Asp-92, and Thr-93 each coordinate K(+). An ATP-binding site is contributed by 60-63 (DFSW). Substrate is bound at residue Lys-256. Glu-258 lines the Mg(2+) pocket. Substrate is bound by residues Gly-281, Asn-282, and Thr-313. Asn-282 serves as a coordination point for Mg(2+).

It belongs to the pyruvate kinase family. Homotetramer. Mg(2+) is required as a cofactor. Requires K(+) as cofactor.

Its subcellular location is the cytoplasm. It is found in the cytosol. The catalysed reaction is pyruvate + ATP = phosphoenolpyruvate + ADP + H(+). Its pathway is carbohydrate degradation; glycolysis; pyruvate from D-glyceraldehyde 3-phosphate: step 5/5. Its function is as follows. Key regulatory enzyme of the glycolytic pathway that catalyzes the final step of glycolysis, converting ADP and phosphoenolpyruvate (PEP) to ATP and pyruvate by essentially irreversible transphosphorylation. This chain is Pyruvate kinase 2, cytosolic, found in Oryza sativa subsp. indica (Rice).